Reading from the N-terminus, the 443-residue chain is Thymidine phosphorylase (443 aa).

Belongs to the thymidine/pyrimidine-nucleoside phosphorylase family. As to quaternary structure, homodimer.

It catalyses the reaction thymidine + phosphate = 2-deoxy-alpha-D-ribose 1-phosphate + thymine. It participates in pyrimidine metabolism; dTMP biosynthesis via salvage pathway; dTMP from thymine: step 1/2. Functionally, the enzymes which catalyze the reversible phosphorolysis of pyrimidine nucleosides are involved in the degradation of these compounds and in their utilization as carbon and energy sources, or in the rescue of pyrimidine bases for nucleotide synthesis. This Shewanella baltica (strain OS185) protein is Thymidine phosphorylase.